Here is a 312-residue protein sequence, read N- to C-terminus: 2-phosphoglycerate kinase (312 aa).

An ATP-cone domain is found at 8–95 (SRILVTDKEY…LWRRVLKKHS (88 aa)).

It belongs to the 2-phosphoglycerate kinase family. A divalent metal cation serves as cofactor.

The enzyme catalyses (2R)-2-phosphoglycerate + ATP = (2R)-2,3-bisphosphoglycerate + ADP + H(+). It functions in the pathway thermoadapter biosynthesis; cyclic 2,3-diphosphoglycerate biosynthesis; cyclic 2,3-diphosphoglycerate from 2-phospho-D-glycerate: step 1/2. Functionally, catalyzes the phosphorylation of 2-phosphoglycerate to 2,3-diphosphoglycerate. Involved in the biosynthesis of cyclic 2,3-bisphosphoglycerate, a thermoprotectant. This Methanococcus maripaludis (strain C7 / ATCC BAA-1331) protein is 2-phosphoglycerate kinase.